The sequence spans 417 residues: UDP-N-acetylglucosamine 1-carboxyvinyltransferase (417 aa).

22-23 (KN) contacts phosphoenolpyruvate. R93 contacts UDP-N-acetyl-alpha-D-glucosamine. Residue C117 is the Proton donor of the active site. A 2-(S-cysteinyl)pyruvic acid O-phosphothioketal modification is found at C117. UDP-N-acetyl-alpha-D-glucosamine-binding positions include 122-126 (RPVDQ), D304, and I326.

It belongs to the EPSP synthase family. MurA subfamily.

Its subcellular location is the cytoplasm. It carries out the reaction phosphoenolpyruvate + UDP-N-acetyl-alpha-D-glucosamine = UDP-N-acetyl-3-O-(1-carboxyvinyl)-alpha-D-glucosamine + phosphate. The protein operates within cell wall biogenesis; peptidoglycan biosynthesis. In terms of biological role, cell wall formation. Adds enolpyruvyl to UDP-N-acetylglucosamine. This chain is UDP-N-acetylglucosamine 1-carboxyvinyltransferase, found in Neisseria meningitidis serogroup B (strain ATCC BAA-335 / MC58).